The chain runs to 382 residues: Galactokinase (382 aa).

A substrate-binding site is contributed by 34 to 37; that stretch reads EHTD. 124–130 serves as a coordination point for ATP; that stretch reads GAGLSSS. S130 and E162 together coordinate Mg(2+). D174 acts as the Proton acceptor in catalysis. Substrate is bound at residue Y223.

This sequence belongs to the GHMP kinase family. GalK subfamily.

The protein resides in the cytoplasm. It carries out the reaction alpha-D-galactose + ATP = alpha-D-galactose 1-phosphate + ADP + H(+). Its pathway is carbohydrate metabolism; galactose metabolism. Its function is as follows. Catalyzes the transfer of the gamma-phosphate of ATP to D-galactose to form alpha-D-galactose-1-phosphate (Gal-1-P). In Salmonella gallinarum (strain 287/91 / NCTC 13346), this protein is Galactokinase.